The primary structure comprises 130 residues: Follitropin subunit beta (130 aa).

A signal peptide spans 1–20; the sequence is MMKSIQLCILLWCLRAVCCH. Disulfide bonds link C22-C70, C36-C85, C39-C123, C47-C101, C51-C103, and C106-C113. N26 and N43 each carry an N-linked (GlcNAc...) asparagine glycan.

This sequence belongs to the glycoprotein hormones subunit beta family. Heterodimer. The active follitropin is a heterodimer composed of an alpha chain/CGA shared with other hormones and a unique beta chain/FSHB shown here.

The protein resides in the secreted. Its function is as follows. Together with the alpha chain CGA constitutes follitropin, the follicle-stimulating hormone, and provides its biological specificity to the hormone heterodimer. Binds FSHR, a G protein-coupled receptor, on target cells to activate downstream signaling pathways. Follitropin is involved in follicle development and spermatogenesis in reproductive organs. The sequence is that of Follitropin subunit beta (Fshb) from Rattus norvegicus (Rat).